The primary structure comprises 417 residues: Succinate--CoA ligase [ADP-forming] subunit beta, mitochondrial (417 aa).

Residues 1–24 (MLRKLANQSLSVAGKWQQQQLRRL) constitute a mitochondrion transit peptide. The ATP-grasp domain occupies 32–275 (AELMSKYGIN…SSQEDPREVA (244 aa)). Residues Lys-71, 78–80 (GRG), and Glu-138 each bind ATP. Residues Asn-230 and Asp-244 each coordinate Mg(2+). Residues Asn-295 and 352-354 (GIM) each bind substrate.

This sequence belongs to the succinate/malate CoA ligase beta subunit family. As to quaternary structure, heterodimer of an alpha and a beta subunit. The cofactor is Mg(2+). As to expression, expressed in roots, stems, flowers, leaves and fruits.

The protein localises to the mitochondrion. It catalyses the reaction succinate + ATP + CoA = succinyl-CoA + ADP + phosphate. The protein operates within carbohydrate metabolism; tricarboxylic acid cycle; succinate from succinyl-CoA (ligase route): step 1/1. Its function is as follows. Succinyl-CoA synthetase functions in the citric acid cycle (TCA), coupling the hydrolysis of succinyl-CoA to the synthesis of ATP and thus represents the only step of substrate-level phosphorylation in the TCA. The beta subunit provides nucleotide specificity of the enzyme and binds the substrate succinate, while the binding sites for coenzyme A and phosphate are found in the alpha subunit. In Solanum lycopersicum (Tomato), this protein is Succinate--CoA ligase [ADP-forming] subunit beta, mitochondrial.